The chain runs to 174 residues: MKKVVKYLISLILAIIIVLFVQTFVIVGHVIPNNDMSPTLNKGDRVIVNKIKVTFNQLNNGDIITYRRGNEIYTSRIIAKPGQSMAFRQGQLYRDDRPVDASYAKNRKIKDFSLRNFKELDGDIIPPNNFVVLNDQDNNKHDSRQFGLIDKKDIIGNVSLRYYPFSKWTVQFKS.

Residues 1–7 (MKKVVKY) are Cytoplasmic-facing. Residues 8–28 (LISLILAIIIVLFVQTFVIVG) form a helical membrane-spanning segment. At 29-174 (HVIPNNDMSP…FSKWTVQFKS (146 aa)) the chain is on the extracellular side.

Belongs to the peptidase S26 family.

It is found in the cell membrane. Functionally, catalytically inactive. The protein is Inactive signal peptidase IA (spsA) of Staphylococcus aureus (strain COL).